We begin with the raw amino-acid sequence, 130 residues long: MYKAETRGISVIVTPRFVEEESSPDESRYFFAYTVEITNNGRDRVQLRSRHWRIIDGRGALQEVRGAGVVGKQPVLGPGESFSYTSGCPLPTPNGTMEGTYTMATADGESFEAVIPAFSLDVPHMRRVMH.

The region spanning 3-127 (KAETRGISVI…FSLDVPHMRR (125 aa)) is the ApaG domain.

The polypeptide is Protein ApaG (Methylobacterium nodulans (strain LMG 21967 / CNCM I-2342 / ORS 2060)).